The primary structure comprises 477 residues: P3 protein (477 aa).

The interval 1 to 21 is disordered; that stretch reads MVLMQDKGSSQQWPGLGGEGG. Helical transmembrane passes span 225-245, 253-273, 281-301, 320-340, 361-381, 383-403, 417-437, and 450-470; these read PMLL…FLMA, ALAL…SYLF, VTLA…FLPL, ISKI…GVLI, VLLL…LAGI, LPIV…GYCL, VSIE…QLSL, and FIVA…HFIY.

This sequence belongs to the bile acid:sodium symporter (BASS) (TC 2.A.28) family.

The protein resides in the membrane. Its function is as follows. The ubiquitous expression and the conservation of the sequence in distant animal species suggest that the gene codes for a protein with housekeeping functions. The chain is P3 protein (SLC10A3) from Homo sapiens (Human).